The following is a 110-amino-acid chain: Class I hydrophobin 2 (110 aa).

An N-terminal signal peptide occupies residues Met-1 to Ala-19. 4 disulfide bridges follow: Cys-29–Cys-89, Cys-36–Cys-83, Cys-37–Cys-70, and Cys-90–Cys-103.

The protein belongs to the fungal hydrophobin family. In terms of assembly, self-assembles to form functional amyloid fibrils called rodlets. Self-assembly into fibrillar rodlets occurs spontaneously at hydrophobic:hydrophilic interfaces and the rodlets further associate laterally to form amphipathic monolayers.

The protein localises to the secreted. Its subcellular location is the cell wall. Its function is as follows. Aerial growth, conidiation, and dispersal of filamentous fungi in the environment rely upon a capability of their secreting small amphipathic proteins called hydrophobins (HPBs) with low sequence identity. Class I can self-assemble into an outermost layer of rodlet bundles on aerial cell surfaces, conferring cellular hydrophobicity that supports fungal growth, development and dispersal; whereas Class II form highly ordered films at water-air interfaces through intermolecular interactions but contribute nothing to the rodlet structure. Pnh2 is a class I hydrophobin that might be involved in the attachment of the hydrophilic wall of hyphae to the hydrophobic surface of wood under inorganic phosphate (Pi)-deficient conditions and enable the mycelium to degrade efficiently the components of wood and to acquire nutrients containing Pi. In Pholiota nameko, this protein is Class I hydrophobin 2.